The following is a 372-amino-acid chain: Queuine tRNA-ribosyltransferase (372 aa).

Asp92 serves as the catalytic Proton acceptor. Residues 92–96, Asp146, Gln188, and Gly215 contribute to the substrate site; that span reads DSGGY. The RNA binding stretch occupies residues 246 to 252; the sequence is GIGSLKE. The active-site Nucleophile is Asp265. The segment at 270 to 274 is RNA binding; important for wobble base 34 recognition; it reads TRLGR. 4 residues coordinate Zn(2+): Cys303, Cys305, Cys308, and His334.

It belongs to the queuine tRNA-ribosyltransferase family. In terms of assembly, homodimer. Within each dimer, one monomer is responsible for RNA recognition and catalysis, while the other monomer binds to the replacement base PreQ1. Requires Zn(2+) as cofactor.

The enzyme catalyses 7-aminomethyl-7-carbaguanine + guanosine(34) in tRNA = 7-aminomethyl-7-carbaguanosine(34) in tRNA + guanine. Its pathway is tRNA modification; tRNA-queuosine biosynthesis. Functionally, catalyzes the base-exchange of a guanine (G) residue with the queuine precursor 7-aminomethyl-7-deazaguanine (PreQ1) at position 34 (anticodon wobble position) in tRNAs with GU(N) anticodons (tRNA-Asp, -Asn, -His and -Tyr). Catalysis occurs through a double-displacement mechanism. The nucleophile active site attacks the C1' of nucleotide 34 to detach the guanine base from the RNA, forming a covalent enzyme-RNA intermediate. The proton acceptor active site deprotonates the incoming PreQ1, allowing a nucleophilic attack on the C1' of the ribose to form the product. After dissociation, two additional enzymatic reactions on the tRNA convert PreQ1 to queuine (Q), resulting in the hypermodified nucleoside queuosine (7-(((4,5-cis-dihydroxy-2-cyclopenten-1-yl)amino)methyl)-7-deazaguanosine). The protein is Queuine tRNA-ribosyltransferase of Prochlorococcus marinus (strain AS9601).